Consider the following 248-residue polypeptide: Triosephosphate isomerase (248 aa).

N11 and K13 together coordinate substrate. The active-site Electrophile is H95. The active-site Proton acceptor is the E165.

It belongs to the triosephosphate isomerase family. In terms of assembly, homodimer.

It is found in the cytoplasm. It catalyses the reaction dihydroxyacetone phosphate = methylglyoxal + phosphate. The enzyme catalyses D-glyceraldehyde 3-phosphate = dihydroxyacetone phosphate. It participates in carbohydrate degradation; glycolysis; D-glyceraldehyde 3-phosphate from glycerone phosphate: step 1/1. It functions in the pathway carbohydrate biosynthesis; gluconeogenesis. In terms of biological role, triosephosphate isomerase is an extremely efficient metabolic enzyme that catalyzes the interconversion between dihydroxyacetone phosphate (DHAP) and D-glyceraldehyde-3-phosphate (G3P) in glycolysis and gluconeogenesis. It is also responsible for the non-negligible production of methylglyoxal a reactive cytotoxic side-product that modifies and can alter proteins, DNA and lipids. The protein is Triosephosphate isomerase (tpi1) of Xenopus laevis (African clawed frog).